We begin with the raw amino-acid sequence, 465 residues long: Chromosomal replication initiator protein DnaA (465 aa).

The interval 1-87 (MLWTDCLTRL…RPGSILSSSE (87 aa)) is domain I, interacts with DnaA modulators. Residues 81–123 (SILSSSEQPATTTAALQTAPIPQPAKGKREPEPVANTAVSSKS) form a disordered region. Residues 88 to 100 (QPATTTAALQTAP) show a composition bias toward low complexity. Residues 88–127 (QPATTTAALQTAPIPQPAKGKREPEPVANTAVSSKSSKKK) are domain II. The tract at residues 128–345 (LLNPQFTFSL…GALNKVVAIS (218 aa)) is domain III, AAA+ region. Residues glycine 173, glycine 175, lysine 176, and threonine 177 each contribute to the ATP site. Residues 346 to 465 (RFKGAPIDLD…YKNLLRLLQS (120 aa)) form a domain IV, binds dsDNA region.

Belongs to the DnaA family. In terms of assembly, oligomerizes as a right-handed, spiral filament on DNA at oriC.

It localises to the cytoplasm. Functionally, plays an essential role in the initiation and regulation of chromosomal replication. ATP-DnaA binds to the origin of replication (oriC) to initiate formation of the DNA replication initiation complex once per cell cycle. Binds the DnaA box (a 9 base pair repeat at the origin) and separates the double-stranded (ds)DNA. Forms a right-handed helical filament on oriC DNA; dsDNA binds to the exterior of the filament while single-stranded (ss)DNA is stabiized in the filament's interior. The ATP-DnaA-oriC complex binds and stabilizes one strand of the AT-rich DNA unwinding element (DUE), permitting loading of DNA polymerase. After initiation quickly degrades to an ADP-DnaA complex that is not apt for DNA replication. Binds acidic phospholipids. The polypeptide is Chromosomal replication initiator protein DnaA (Acinetobacter baumannii (strain SDF)).